Consider the following 205-residue polypeptide: Large ribosomal subunit protein uL18 (205 aa).

This sequence belongs to the universal ribosomal protein uL18 family. Part of the 50S ribosomal subunit. Contacts the 5S and 23S rRNAs.

This is one of the proteins that bind and probably mediate the attachment of the 5S RNA into the large ribosomal subunit, where it forms part of the central protuberance. The polypeptide is Large ribosomal subunit protein uL18 (Pyrobaculum aerophilum (strain ATCC 51768 / DSM 7523 / JCM 9630 / CIP 104966 / NBRC 100827 / IM2)).